A 211-amino-acid polypeptide reads, in one-letter code: MKVTAAFAGLLVTAFAPPVPEPVLVSRSAGINYVQNYNGNLGDFTYDESAGTFSMYWEDGVSSDFVVGLGWTTGSSNAITYSAEYSASGSSSYLAVYGWVNLSQAEYYIVEDYGDYNPCSSATSLGTEYSDGSTYQVCTDTRTNEPSITGTSTFTQYFSVRESTRTSGTVTVAIHFNFWAQHGFGNSDFNYQVMAVEAWSGACSASVTISS.

Residues 1–16 form the signal peptide; the sequence is MKVTAAFAGLLVTAFA. The 192-residue stretch at 19-210 folds into the GH11 domain; sequence VPEPVLVSRS…GACSASVTIS (192 aa). N-linked (GlcNAc...) asparagine glycosylation is present at asparagine 101. The Nucleophile role is filled by glutamate 106. Catalysis depends on glutamate 197, which acts as the Proton donor.

This sequence belongs to the glycosyl hydrolase 11 (cellulase G) family.

The protein localises to the secreted. It catalyses the reaction Endohydrolysis of (1-&gt;4)-beta-D-xylosidic linkages in xylans.. It participates in glycan degradation; xylan degradation. Functionally, endo-1,4-beta-xylanase involved in the hydrolysis of xylan, a major structural heterogeneous polysaccharide found in plant biomass representing the second most abundant polysaccharide in the biosphere, after cellulose. In Aspergillus niger, this protein is Endo-1,4-beta-xylanase 4 (XYN4).